Reading from the N-terminus, the 739-residue chain is Oxysterol-binding protein-related protein 9 (739 aa).

A PH domain is found at 2-99; it reads ASIMEGPLSK…WIHALEETIL (98 aa). 2 disordered regions span residues 220–292 and 306–371; these read TQAS…SYSS and SSTS…ESVE. The segment covering 249 to 259 has biased composition (polar residues); the sequence is NLGSRQSPTPI. A compositionally biased stretch (low complexity) spans 260–276; the sequence is STGSGQSAPSSSLTSPS. 3 stretches are compositionally biased toward polar residues: residues 277–292, 306–330, and 338–352; these read HVNL…SYSS, SSTS…STGA, and TESL…TNEA.

It belongs to the OSBP family.

It carries out the reaction a 1,2-diacyl-sn-glycero-3-phospho-(1D-myo-inositol 4-phosphate)(out) + a 1,2-diacyl-sn-glycero-3-phospho-L-serine(in) = a 1,2-diacyl-sn-glycero-3-phospho-(1D-myo-inositol 4-phosphate)(in) + a 1,2-diacyl-sn-glycero-3-phospho-L-serine(out). Functionally, interacts with OSBPL11 to function as lipid transfer proteins. Together they form a heterodimer that localizes at the ER-trans-Golgi membrane contact sites, and exchanges phosphatidylserine (1,2-diacyl-sn-glycero-3-phospho-L-serine, PS) for phosphatidylinositol-4-phosphate (1,2-diacyl-sn-glycero-3-phospho-(1D-myo-inositol 4-phosphate), PI(4)P) between the two organelles, a step that is critical for sphingomyelin synthesis in the Golgi complex. The sequence is that of Oxysterol-binding protein-related protein 9 (osbpl9) from Xenopus tropicalis (Western clawed frog).